The following is a 474-amino-acid chain: ATP synthase subunit beta, chloroplastic (474 aa).

Residue 155-162 participates in ATP binding; that stretch reads GGAGVGKT.

The protein belongs to the ATPase alpha/beta chains family. In terms of assembly, F-type ATPases have 2 components, CF(1) - the catalytic core - and CF(0) - the membrane proton channel. CF(1) has five subunits: alpha(3), beta(3), gamma(1), delta(1), epsilon(1). CF(0) has four main subunits: a(1), b(1), b'(1) and c(9-12).

Its subcellular location is the plastid. The protein localises to the chloroplast thylakoid membrane. It carries out the reaction ATP + H2O + 4 H(+)(in) = ADP + phosphate + 5 H(+)(out). In terms of biological role, produces ATP from ADP in the presence of a proton gradient across the membrane. The catalytic sites are hosted primarily by the beta subunits. The protein is ATP synthase subunit beta, chloroplastic of Thalassiosira pseudonana (Marine diatom).